The chain runs to 318 residues: Pantothenate kinase (318 aa).

96–103 contacts ATP; it reads GSVSVGKS.

The protein belongs to the prokaryotic pantothenate kinase family.

Its subcellular location is the cytoplasm. The catalysed reaction is (R)-pantothenate + ATP = (R)-4'-phosphopantothenate + ADP + H(+). It participates in cofactor biosynthesis; coenzyme A biosynthesis; CoA from (R)-pantothenate: step 1/5. This is Pantothenate kinase from Bradyrhizobium sp. (strain BTAi1 / ATCC BAA-1182).